The chain runs to 306 residues: Serine/threonine-protein kinase csk1 (306 aa).

One can recognise a Protein kinase domain in the interval 11 to 306; that stretch reads LTDIRHLTDG…KVSARLSQYA (296 aa). Residues 17-25 and Lys40 each bind ATP; that span reads LTDGTISEV. The active-site Proton acceptor is the Asp129.

Belongs to the protein kinase superfamily. CMGC Ser/Thr protein kinase family. CDC2/CDKX subfamily.

It catalyses the reaction L-seryl-[protein] + ATP = O-phospho-L-seryl-[protein] + ADP + H(+). It carries out the reaction L-threonyl-[protein] + ATP = O-phospho-L-threonyl-[protein] + ADP + H(+). In terms of biological role, acts as a CAK-activating kinase that specifically activates crk1 of the crk1-mcs2 CAK complex. In Schizosaccharomyces pombe (strain 972 / ATCC 24843) (Fission yeast), this protein is Serine/threonine-protein kinase csk1 (csk1).